We begin with the raw amino-acid sequence, 474 residues long: MAKKLYIKTFGCQMNEYDSKKMADVLRDAQHMEKTDDPAAADVILFNTCSVREKAQEKVFHDLGRVRHLKAANPDLLIGVGGCVASQEGAEIVKRAPYVDLVFGPQTLHRLPQMISTRQITGRPQVDISFPEIEKFDHLPPARTEGVTAFVSIMEGCSKYCSFCVVPYTRGEEISRPLDDILTEIAGLTNLGVKEVTLLGQNVNAYRGRMQYAEEGELADFALLLEYLHEIPGIERIRYTTSHPREFTPRLIEAYKASPKLVSHVHLPVQSGSDRILAAMKRGYTSLEYKSIIRRLRAARPDISITSDFIVGFPGETEADFEATMKLIEAVNFDGSFSFIYSSRPGTPAAGLEDTTPHQVKLERLQRLQEKVELQAQAISVRMVGTTQRVLVEGLSRKDPGELSGRTDNNRVVNFPGSPEMIGKFAELKITAALSHTLRGENVRADDAPIEPEAAIFRRYGAGPDSIGNRDNLT.

The 118-residue stretch at 3–120 (KKLYIKTFGC…LPQMISTRQI (118 aa)) folds into the MTTase N-terminal domain. 6 residues coordinate [4Fe-4S] cluster: Cys-12, Cys-49, Cys-83, Cys-157, Cys-161, and Cys-164. Residues 143-382 (RTEGVTAFVS…ELQAQAISVR (240 aa)) enclose the Radical SAM core domain. Residues 381–444 (VRMVGTTQRV…SHTLRGENVR (64 aa)) enclose the TRAM domain.

Belongs to the methylthiotransferase family. MiaB subfamily. As to quaternary structure, monomer. [4Fe-4S] cluster serves as cofactor.

Its subcellular location is the cytoplasm. It catalyses the reaction N(6)-dimethylallyladenosine(37) in tRNA + (sulfur carrier)-SH + AH2 + 2 S-adenosyl-L-methionine = 2-methylsulfanyl-N(6)-dimethylallyladenosine(37) in tRNA + (sulfur carrier)-H + 5'-deoxyadenosine + L-methionine + A + S-adenosyl-L-homocysteine + 2 H(+). Catalyzes the methylthiolation of N6-(dimethylallyl)adenosine (i(6)A), leading to the formation of 2-methylthio-N6-(dimethylallyl)adenosine (ms(2)i(6)A) at position 37 in tRNAs that read codons beginning with uridine. The polypeptide is tRNA-2-methylthio-N(6)-dimethylallyladenosine synthase (Nitrosospira multiformis (strain ATCC 25196 / NCIMB 11849 / C 71)).